Consider the following 68-residue polypeptide: Putative membrane protein insertion efficiency factor (68 aa).

The protein belongs to the UPF0161 family.

The protein localises to the cell inner membrane. Functionally, could be involved in insertion of integral membrane proteins into the membrane. The chain is Putative membrane protein insertion efficiency factor from Persephonella marina (strain DSM 14350 / EX-H1).